The chain runs to 579 residues: Probable receptor-like serine/threonine-protein kinase At5g57670 (579 aa).

Position 256 is a phosphothreonine (threonine 256). Residues 267-542 form the Protein kinase domain; the sequence is FHQGNIVGIG…LLTNGNEAEI (276 aa). ATP is bound by residues 273–281 and lysine 295; that span reads VGIGGYSEV. Residue aspartate 392 is the Proton acceptor of the active site. Serine 396 carries the phosphoserine modification. Threonine 432 bears the Phosphothreonine mark.

Belongs to the protein kinase superfamily. Ser/Thr protein kinase family.

It carries out the reaction L-seryl-[protein] + ATP = O-phospho-L-seryl-[protein] + ADP + H(+). The enzyme catalyses L-threonyl-[protein] + ATP = O-phospho-L-threonyl-[protein] + ADP + H(+). The polypeptide is Probable receptor-like serine/threonine-protein kinase At5g57670 (Arabidopsis thaliana (Mouse-ear cress)).